A 379-amino-acid polypeptide reads, in one-letter code: Acetylajmalan esterase 1 (379 aa).

The first 20 residues, 1 to 20 (MGFAPLLVFSLFVFAGTTKG), serve as a signal peptide directing secretion. Serine 34 serves as the catalytic Nucleophile. Residues asparagine 96, asparagine 178, asparagine 197, and asparagine 291 are each glycosylated (N-linked (GlcNAc...) asparagine). Catalysis depends on residues aspartate 332 and histidine 335.

This sequence belongs to the 'GDSL' lipolytic enzyme family. As to expression, expressed in roots and leaves at low levels.

It catalyses the reaction 17-O-acetylnorajmaline + H2O = norajmaline + acetate + H(+). The catalysed reaction is 17-O-acetylajmaline + H2O = ajmaline + acetate + H(+). It participates in alkaloid biosynthesis; ajmaline biosynthesis. Acetylesterase involved in the biosynthesis of ajmaline-type monoterpenoid indole alkaloids (MIAs) natural products, important plant-derived pharmaceuticals used in the therapy of heart disorders. Deacetylates 17-O-acetylnorajmaline to produce norajmaline. May also catalyze the conversion of 17-O-acetylajmaline to ajmaline. In Rauvolfia serpentina (Serpentine wood), this protein is Acetylajmalan esterase 1.